The following is a 135-amino-acid chain: Protein NrdI (135 aa).

It belongs to the NrdI family.

Probably involved in ribonucleotide reductase function. This chain is Protein NrdI, found in Brucella abortus (strain S19).